The chain runs to 185 residues: MAVMPDKWIREKAESFGMIEPFVDHKSSKGVMSFGLSSYGYDARVDNKFKIFTNVNSAVVDPKDFSKNSFIDKETDVCIIPPNSFALASTVEYFHIPRDVLAICVGKSTYARCGIIVNVTPLEPGWKGHVTLEFSNTTPLPAKIYANEGACQFVFLSGESECEKSYDDIKGKYMNQHGITLPLVK.

DCTP-binding positions include 107-112, 131-133, Gln152, Tyr166, and Gln176; these read KSTYAR and TLE. The Proton donor/acceptor role is filled by Glu133.

Belongs to the dCTP deaminase family. As to quaternary structure, homotrimer.

It carries out the reaction dCTP + H2O + H(+) = dUTP + NH4(+). The protein operates within pyrimidine metabolism; dUMP biosynthesis; dUMP from dCTP (dUTP route): step 1/2. In terms of biological role, catalyzes the deamination of dCTP to dUTP. The chain is dCTP deaminase from Wolbachia sp. subsp. Brugia malayi (strain TRS).